The chain runs to 170 residues: Peptide deformylase (170 aa).

Positions 93 and 135 each coordinate Fe cation. Glutamate 136 is a catalytic residue. Histidine 139 lines the Fe cation pocket.

This sequence belongs to the polypeptide deformylase family. Requires Fe(2+) as cofactor.

It carries out the reaction N-terminal N-formyl-L-methionyl-[peptide] + H2O = N-terminal L-methionyl-[peptide] + formate. Removes the formyl group from the N-terminal Met of newly synthesized proteins. Requires at least a dipeptide for an efficient rate of reaction. N-terminal L-methionine is a prerequisite for activity but the enzyme has broad specificity at other positions. The protein is Peptide deformylase of Syntrophobacter fumaroxidans (strain DSM 10017 / MPOB).